The primary structure comprises 358 residues: Protein RecA 2 (358 aa).

Position 69–76 (69–76) interacts with ATP; that stretch reads GPESSGKT. The interval 331 to 358 is disordered; the sequence is GIGKSGAPSPRRRTSPRRPKVAARSAAV. Positions 340 to 351 are enriched in basic residues; the sequence is PRRRTSPRRPKV.

This sequence belongs to the RecA family.

It is found in the cytoplasm. Can catalyze the hydrolysis of ATP in the presence of single-stranded DNA, the ATP-dependent uptake of single-stranded DNA by duplex DNA, and the ATP-dependent hybridization of homologous single-stranded DNAs. It interacts with LexA causing its activation and leading to its autocatalytic cleavage. In Myxococcus xanthus, this protein is Protein RecA 2.